Here is a 256-residue protein sequence, read N- to C-terminus: MYSIRKQSRNLQRKWNSNITNRYPIKRKYVAGHTRPCVRRRLLYEPVERPFGHNVLCEKQHGDVFNLQQNTSYTSFVTYPSRGPSGDGRSRDYIKLQSMSVSGVIHAKANGNDDPMEVSPVVNGVFVFSLIMDTKPYLPAGVQGLPTFEELFGPYSACYVNLRLLNNQQHRYRVLHSVKRFVSSSGDTKVSQFRFNKRLSTRRYTIWASFHDGDLVNAGGNYRNISKNAILVSYAFVSEHAMSCKPFVQIETSYVG.

The Bipartite nuclear localization signal motif lies at 18 to 39; it reads NITNRYPIKRKYVAGHTRPCVR. A Nuclear localization signal motif is present at residues 81 to 96; sequence SRGPSGDGRSRDYIKL. The interval 150–187 is interaction with Arabidopsis thaliana NSI protein; sequence ELFGPYSACYVNLRLLNNQQHRYRVLHSVKRFVSSSGD.

The protein belongs to the begomovirus nuclear shuttle protein family. Binds to single-stranded and double-stranded viral DNA. Interacts with the host nuclear shuttle interacting (NSI) protein. This interaction may allow NSP to recruit NSI monomers to the viral genome and thus regulate nuclear export of viral genome by NSP.

It localises to the host nucleus. The protein localises to the host cytoplasm. It is found in the host cell membrane. In terms of biological role, binds to the genomic viral ssDNA, shuttles it into and out of the cell nucleus. Begomoviruses use 2 proteins to transport their DNA from cell to cell. The nuclear shuttle protein (NSP) shuttles it between nucleus and cytoplasm and the movement protein (MP) probably transports the DNA-NSP complex to the cell periphery and facilitates movement across the cell wall. The sequence is that of Nuclear shuttle protein from Hewittia sublobata (Coralbush).